The sequence spans 501 residues: Putative ribose/galactose/methyl galactoside import ATP-binding protein 1 (501 aa).

ABC transporter domains are found at residues 5 to 237 (VSLS…VGRQ) and 249 to 492 (VPGE…MTRS). ATP is bound at residue 37–44 (GENGAGKS).

Belongs to the ABC transporter superfamily. Carbohydrate importer 2 (CUT2) (TC 3.A.1.2) family.

It localises to the cell inner membrane. The catalysed reaction is D-ribose(out) + ATP + H2O = D-ribose(in) + ADP + phosphate + H(+). It carries out the reaction D-galactose(out) + ATP + H2O = D-galactose(in) + ADP + phosphate + H(+). Part of an ABC transporter complex involved in carbohydrate import. Could be involved in ribose, galactose and/or methyl galactoside import. Responsible for energy coupling to the transport system. In Rhizobium meliloti (strain 1021) (Ensifer meliloti), this protein is Putative ribose/galactose/methyl galactoside import ATP-binding protein 1.